Consider the following 534-residue polypeptide: Ulvan lyase NLR42 (534 aa).

Positions 1–47 are cleaved as a signal peptide; it reads MVFFKDLFIFKSLIKGSLYSGHMKKKLLNYLPLFALMLFTVSMMAQT. The cysteines at positions 59 and 89 are disulfide-linked. Ca(2+) is bound by residues Gly63, Asn68, Asp86, Thr88, Ala91, and Asp92. Tyr164 contributes to the substrate binding site. Lys169 serves as the catalytic Proton acceptor. Residues 218–223 and 288–291 contribute to the substrate site; these read SGAAGR and YRVK. The active-site Proton donor/acceptor is the Tyr288. Residues 316 to 449 form a ulvan-binding domain region; the sequence is PAADIYRIKN…SKWNLESTTL (134 aa). Positions 450–534 are cleaved as a propeptide — removed by the type IX secretion system (T9SS); the sequence is SVDSQQIASV…KVYQTKLIVN (85 aa).

This sequence belongs to the polysaccharide lyase 28 family. Requires Ca(2+) as cofactor.

It is found in the secreted. Its function is as follows. Ulvan lyase involved in ulvan degradation. Ulvan is the main polysaccharide component of the Ulvales (green seaweed) cell wall. It is composed of disaccharide building blocks comprising 3-sulfated rhamnose (Rha3S) linked to D-glucuronic acid (GlcA), L-iduronic acid (IduA), or D-xylose (Xyl). Ulvan lyase catalyzes the endolytic cleavage of the glycosidic bond between Rha3S and the uronic acids GlcA or IduA, producing oligosaccharides that have unsaturated 4-deoxy-L-threo-hex-4-enopyranosiduronic acid (deltaUA) at the non-reducing end. This results eventually in the degradation of the ulvan polysaccharide into deltaUA-Rha3S disaccharides and deltaUA-Rha3S-Xyl-Rha3S tetrasaccharides. The sequence is that of Ulvan lyase NLR42 from Nonlabens ulvanivorans (Persicivirga ulvanivorans).